We begin with the raw amino-acid sequence, 737 residues long: Dual specificity protein kinase KNS1 (737 aa).

Disordered stretches follow at residues 1 to 33 (MSQN…SSNK) and 270 to 290 (SSLR…NKSN). Residues 15–33 (ANMNNSTTTGPANNTSSNK) are compositionally biased toward polar residues. Residues 277–290 (SNGSSESASSNKSN) are compositionally biased toward low complexity. The 408-residue stretch at 313 to 720 (FVVKDLLGQG…AKDALDHEWF (408 aa)) folds into the Protein kinase domain. Residues 319–327 (LGQGTFGKV) and Lys343 contribute to the ATP site. Asp440 functions as the Proton acceptor in the catalytic mechanism. Thr562 carries the phosphothreonine modification.

Belongs to the protein kinase superfamily. CMGC Ser/Thr protein kinase family. Lammer subfamily. Post-translationally, phosphorylated (auto-) on Ser/Thr/Tyr.

It carries out the reaction L-seryl-[protein] + ATP = O-phospho-L-seryl-[protein] + ADP + H(+). It catalyses the reaction L-threonyl-[protein] + ATP = O-phospho-L-threonyl-[protein] + ADP + H(+). The catalysed reaction is L-tyrosyl-[protein] + ATP = O-phospho-L-tyrosyl-[protein] + ADP + H(+). Its function is as follows. Nonessential protein kinase. In Saccharomyces cerevisiae (strain ATCC 204508 / S288c) (Baker's yeast), this protein is Dual specificity protein kinase KNS1 (KNS1).